The following is a 199-amino-acid chain: NAD(P)H dehydrogenase (quinone) (199 aa).

Residues 4–190 (VLVLYYSAYG…GGARYQGKVI (187 aa)) form the Flavodoxin-like domain. FMN is bound by residues 10 to 15 (SAYGHI) and 78 to 80 (TRF). Y12 provides a ligand contact to NAD(+). W98 contacts substrate. Residues 113-119 (STASQHG) and H134 each bind FMN.

It belongs to the WrbA family. It depends on FMN as a cofactor.

It catalyses the reaction a quinone + NADH + H(+) = a quinol + NAD(+). The enzyme catalyses a quinone + NADPH + H(+) = a quinol + NADP(+). This is NAD(P)H dehydrogenase (quinone) from Rhodopseudomonas palustris (strain BisB18).